The primary structure comprises 67 residues: Large ribosomal subunit protein bL31 (67 aa).

Zn(2+) contacts are provided by Cys-16, Cys-18, Cys-36, and Cys-39.

This sequence belongs to the bacterial ribosomal protein bL31 family. Type A subfamily. As to quaternary structure, part of the 50S ribosomal subunit. Requires Zn(2+) as cofactor.

In terms of biological role, binds the 23S rRNA. This chain is Large ribosomal subunit protein bL31, found in Treponema denticola (strain ATCC 35405 / DSM 14222 / CIP 103919 / JCM 8153 / KCTC 15104).